The sequence spans 432 residues: Adenylosuccinate synthetase (432 aa).

GTP contacts are provided by residues 12 to 18 and 40 to 42; these read GDEGKGK and GHT. The active-site Proton acceptor is the aspartate 13. Aspartate 13 and glycine 40 together coordinate Mg(2+). IMP-binding positions include 13-16, 38-41, threonine 132, arginine 146, glutamine 226, threonine 241, and arginine 305; these read DEGK and NAGH. Catalysis depends on histidine 41, which acts as the Proton donor. Position 301 to 307 (301 to 307) interacts with substrate; that stretch reads TVTGRKR. Residues arginine 307, 333–335, and 415–417 each bind GTP; these read KLD and STS.

Belongs to the adenylosuccinate synthetase family. Homodimer. The cofactor is Mg(2+).

The protein localises to the cytoplasm. The catalysed reaction is IMP + L-aspartate + GTP = N(6)-(1,2-dicarboxyethyl)-AMP + GDP + phosphate + 2 H(+). The protein operates within purine metabolism; AMP biosynthesis via de novo pathway; AMP from IMP: step 1/2. Its function is as follows. Plays an important role in the de novo pathway of purine nucleotide biosynthesis. Catalyzes the first committed step in the biosynthesis of AMP from IMP. This chain is Adenylosuccinate synthetase, found in Allorhizobium ampelinum (strain ATCC BAA-846 / DSM 112012 / S4) (Agrobacterium vitis (strain S4)).